The following is an 836-amino-acid chain: Outer membrane usher protein PapC (836 aa).

Residues 1–24 form the signal peptide; it reads MKDRIPFAVNNITCVILLSLFCNA. A disulfide bridge connects residues Cys-814 and Cys-832.

This sequence belongs to the fimbrial export usher family.

It is found in the cell outer membrane. Functionally, involved in the export and assembly of pili subunits across the outer membrane. Forms a hexameric ring-shaped pore in the outer bacterial membrane. The 2 nanometer-diameter pore allows the passage of the thin tip fibrillum. As for the rod, it probably unwinds into linear fibers which would therefore be narrow enough to pass through the pore. This chain is Outer membrane usher protein PapC (papC), found in Escherichia coli.